The primary structure comprises 209 residues: Methylthioribulose-1-phosphate dehydratase (209 aa).

Positions 98 and 100 each coordinate Zn(2+).

Belongs to the aldolase class II family. MtnB subfamily. In terms of assembly, homotetramer. It depends on Zn(2+) as a cofactor.

The catalysed reaction is 5-(methylsulfanyl)-D-ribulose 1-phosphate = 5-methylsulfanyl-2,3-dioxopentyl phosphate + H2O. It participates in amino-acid biosynthesis; L-methionine biosynthesis via salvage pathway; L-methionine from S-methyl-5-thio-alpha-D-ribose 1-phosphate: step 2/6. In terms of biological role, catalyzes the dehydration of methylthioribulose-1-phosphate (MTRu-1-P) into 2,3-diketo-5-methylthiopentyl-1-phosphate (DK-MTP-1-P). The sequence is that of Methylthioribulose-1-phosphate dehydratase (mtnB) from Bacillus subtilis (strain 168).